We begin with the raw amino-acid sequence, 160 residues long: General odorant-binding protein 2 (160 aa).

Positions 1–20 are cleaved as a signal peptide; sequence MFSFLILVFVASVADSVIGT. 3 cysteine pairs are disulfide-bonded: Cys38–Cys73, Cys69–Cys127, and Cys116–Cys136.

The protein belongs to the PBP/GOBP family. In terms of assembly, homodimer. Detected in antenna (at protein level). Expressed at high levels in antenna.

In terms of biological role, present in the aqueous fluid surrounding olfactory sensory dendrites and are thought to aid in the capture and transport of hydrophobic odorants into and through this fluid. This Bombyx mori (Silk moth) protein is General odorant-binding protein 2.